The chain runs to 919 residues: Translocase of chloroplast 101, chloroplastic (919 aa).

Disordered stretches follow at residues Ser20–Gly47 and Val64–Arg211. Positions Ser73 to Pro88 are enriched in basic and acidic residues. The segment covering Phe96–Lys128 has biased composition (acidic residues). The segment covering Gln182–Gly207 has biased composition (polar residues). Residues Asp284–Arg513 form the AIG1-type G domain. Positions Gly293–Ser300 are G1. Gly296–Ala301 contacts GTP. A Mg(2+)-binding site is contributed by Ser300. Residues Pro319–Lys323 form a G2 region. The G3 stretch occupies residues Asp340–Gly343. A G4 region spans residues Thr412–Ser415. GTP-binding positions include His413 and Glu461–Asn462. Residues Glu461–His463 are G5. Disordered stretches follow at residues Leu540–Glu585 and Arg611–Asp650. Over residues Glu543 to Glu567 the composition is skewed to acidic residues. The segment covering Leu574–Glu585 has biased composition (basic and acidic residues). Positions Ala629–Ala638 are enriched in acidic residues. Residues Pro641–Asp650 show a composition bias toward low complexity. Residues Met893–Gly914 form a helical membrane-spanning segment.

This sequence belongs to the TRAFAC class TrmE-Era-EngA-EngB-Septin-like GTPase superfamily. AIG1/Toc34/Toc159-like paraseptin GTPase family. TOC159 subfamily. Part of the TOC core complex. Mg(2+) serves as cofactor.

It localises to the plastid. The protein resides in the chloroplast outer membrane. Its function is as follows. GTPase involved in protein precursor import into chloroplasts. Seems to recognize chloroplast-destined precursor proteins and regulate their presentation to the translocation channel through GTP hydrolysis. Probably specialized in the import of nuclear encoded non-photosynthetic preproteins from the cytoplasm to the chloroplast. This Physcomitrium patens (Spreading-leaved earth moss) protein is Translocase of chloroplast 101, chloroplastic.